A 96-amino-acid chain; its full sequence is Co-chaperonin GroES (96 aa).

The protein belongs to the GroES chaperonin family. As to quaternary structure, heptamer of 7 subunits arranged in a ring. Interacts with the chaperonin GroEL.

The protein resides in the cytoplasm. Its function is as follows. Together with the chaperonin GroEL, plays an essential role in assisting protein folding. The GroEL-GroES system forms a nano-cage that allows encapsulation of the non-native substrate proteins and provides a physical environment optimized to promote and accelerate protein folding. GroES binds to the apical surface of the GroEL ring, thereby capping the opening of the GroEL channel. This Methylobacillus flagellatus (strain ATCC 51484 / DSM 6875 / VKM B-1610 / KT) protein is Co-chaperonin GroES.